The chain runs to 225 residues: 3-dehydroquinate dehydratase (225 aa).

Residues Ser6, Glu30–Arg32, and Arg62 each bind 3-dehydroquinate. His118 acts as the Proton donor/acceptor in catalysis. Residue Lys143 is the Schiff-base intermediate with substrate of the active site. Residues Arg186, Ser205, and Gln209 each contribute to the 3-dehydroquinate site.

Belongs to the type-I 3-dehydroquinase family. As to quaternary structure, homodimer.

It catalyses the reaction 3-dehydroquinate = 3-dehydroshikimate + H2O. Its pathway is metabolic intermediate biosynthesis; chorismate biosynthesis; chorismate from D-erythrose 4-phosphate and phosphoenolpyruvate: step 3/7. Functionally, involved in the third step of the chorismate pathway, which leads to the biosynthesis of aromatic amino acids. Catalyzes the cis-dehydration of 3-dehydroquinate (DHQ) and introduces the first double bond of the aromatic ring to yield 3-dehydroshikimate. This chain is 3-dehydroquinate dehydratase, found in Streptococcus pneumoniae (strain ATCC 700669 / Spain 23F-1).